Reading from the N-terminus, the 135-residue chain is Transcription antitermination protein NusB (135 aa).

The protein belongs to the NusB family.

Functionally, involved in transcription antitermination. Required for transcription of ribosomal RNA (rRNA) genes. Binds specifically to the boxA antiterminator sequence of the ribosomal RNA (rrn) operons. The chain is Transcription antitermination protein NusB from Shewanella halifaxensis (strain HAW-EB4).